The sequence spans 427 residues: Ribosomal protein uS12 methylthiotransferase RimO (427 aa).

The 116-residue stretch at 1–116 (MNFYVDVLGC…IAENIGKESI (116 aa)) folds into the MTTase N-terminal domain. Residues Cys-10, Cys-46, Cys-79, Cys-145, Cys-149, and Cys-152 each contribute to the [4Fe-4S] cluster site. In terms of domain architecture, Radical SAM core spans 131 to 360 (VDEKQYAYVK…MEEQSKISFE (230 aa)). Residues 363–426 (EKMVGKTFKV…VYDLEGKIVE (64 aa)) form the TRAM domain.

The protein belongs to the methylthiotransferase family. RimO subfamily. Requires [4Fe-4S] cluster as cofactor.

It is found in the cytoplasm. The enzyme catalyses L-aspartate(89)-[ribosomal protein uS12]-hydrogen + (sulfur carrier)-SH + AH2 + 2 S-adenosyl-L-methionine = 3-methylsulfanyl-L-aspartate(89)-[ribosomal protein uS12]-hydrogen + (sulfur carrier)-H + 5'-deoxyadenosine + L-methionine + A + S-adenosyl-L-homocysteine + 2 H(+). Its function is as follows. Catalyzes the methylthiolation of an aspartic acid residue of ribosomal protein uS12. This Thermosipho africanus (strain TCF52B) protein is Ribosomal protein uS12 methylthiotransferase RimO.